A 338-amino-acid chain; its full sequence is UDP-3-O-acylglucosamine N-acyltransferase (338 aa).

His243 acts as the Proton acceptor in catalysis.

The protein belongs to the transferase hexapeptide repeat family. LpxD subfamily. As to quaternary structure, homotrimer.

It catalyses the reaction a UDP-3-O-[(3R)-3-hydroxyacyl]-alpha-D-glucosamine + a (3R)-hydroxyacyl-[ACP] = a UDP-2-N,3-O-bis[(3R)-3-hydroxyacyl]-alpha-D-glucosamine + holo-[ACP] + H(+). It functions in the pathway bacterial outer membrane biogenesis; LPS lipid A biosynthesis. Functionally, catalyzes the N-acylation of UDP-3-O-acylglucosamine using 3-hydroxyacyl-ACP as the acyl donor. Is involved in the biosynthesis of lipid A, a phosphorylated glycolipid that anchors the lipopolysaccharide to the outer membrane of the cell. This Amoebophilus asiaticus (strain 5a2) protein is UDP-3-O-acylglucosamine N-acyltransferase.